We begin with the raw amino-acid sequence, 402 residues long: CCA-adding enzyme (402 aa).

2 residues coordinate ATP: Gly-32 and Arg-35. 2 residues coordinate CTP: Gly-32 and Arg-35. Residues Asp-45 and Asp-47 each coordinate Mg(2+). Residues Arg-119, Asp-162, Arg-165, Arg-168, and Arg-171 each contribute to the ATP site. Positions 119, 162, 165, 168, and 171 each coordinate CTP.

Belongs to the tRNA nucleotidyltransferase/poly(A) polymerase family. Bacterial CCA-adding enzyme type 3 subfamily. As to quaternary structure, homodimer. Mg(2+) serves as cofactor.

The enzyme catalyses a tRNA precursor + 2 CTP + ATP = a tRNA with a 3' CCA end + 3 diphosphate. The catalysed reaction is a tRNA with a 3' CCA end + 2 CTP + ATP = a tRNA with a 3' CCACCA end + 3 diphosphate. Its function is as follows. Catalyzes the addition and repair of the essential 3'-terminal CCA sequence in tRNAs without using a nucleic acid template. Adds these three nucleotides in the order of C, C, and A to the tRNA nucleotide-73, using CTP and ATP as substrates and producing inorganic pyrophosphate. tRNA 3'-terminal CCA addition is required both for tRNA processing and repair. Also involved in tRNA surveillance by mediating tandem CCA addition to generate a CCACCA at the 3' terminus of unstable tRNAs. While stable tRNAs receive only 3'-terminal CCA, unstable tRNAs are marked with CCACCA and rapidly degraded. This is CCA-adding enzyme from Lactococcus lactis subsp. cremoris (strain MG1363).